The following is an 835-amino-acid chain: Protein translocase subunit SecA 1 (835 aa).

ATP-binding positions include Gln-85, Gly-103–Thr-107, and Asp-492. The segment at Val-788–Val-807 is disordered. Positions 819, 821, 830, and 831 each coordinate Zn(2+).

This sequence belongs to the SecA family. In terms of assembly, monomer and homodimer. Part of the essential Sec protein translocation apparatus which comprises SecA, SecYEG and auxiliary proteins SecDF. Other proteins may also be involved. Zn(2+) serves as cofactor.

The protein resides in the cell membrane. It localises to the cytoplasm. It carries out the reaction ATP + H2O + cellular proteinSide 1 = ADP + phosphate + cellular proteinSide 2.. Part of the Sec protein translocase complex. Interacts with the SecYEG preprotein conducting channel. Has a central role in coupling the hydrolysis of ATP to the transfer of proteins into and across the cell membrane, serving as an ATP-driven molecular motor driving the stepwise translocation of polypeptide chains across the membrane. The chain is Protein translocase subunit SecA 1 from Bacillus thuringiensis subsp. konkukian (strain 97-27).